The sequence spans 338 residues: Lipoate-protein ligase A (338 aa).

Residues Pro-29–Val-216 form the BPL/LPL catalytic domain. ATP is bound by residues Arg-71, Gly-76–Phe-79, and Lys-134. Lys-134 is a (R)-lipoate binding site.

It belongs to the LplA family. Monomer.

It is found in the cytoplasm. The catalysed reaction is L-lysyl-[lipoyl-carrier protein] + (R)-lipoate + ATP = N(6)-[(R)-lipoyl]-L-lysyl-[lipoyl-carrier protein] + AMP + diphosphate + H(+). It participates in protein modification; protein lipoylation via exogenous pathway; protein N(6)-(lipoyl)lysine from lipoate: step 1/2. The protein operates within protein modification; protein lipoylation via exogenous pathway; protein N(6)-(lipoyl)lysine from lipoate: step 2/2. In terms of biological role, catalyzes both the ATP-dependent activation of exogenously supplied lipoate to lipoyl-AMP and the transfer of the activated lipoyl onto the lipoyl domains of lipoate-dependent enzymes. This Salmonella dublin (strain CT_02021853) protein is Lipoate-protein ligase A.